A 390-amino-acid chain; its full sequence is Elongation factor Tu 2 (390 aa).

The 192-residue stretch at 10-201 (KPHVNVGTIG…LDEYVAVPPR (192 aa)) folds into the tr-type G domain. Residues 19-26 (GHVDHGKT) are G1. A GTP-binding site is contributed by 19–26 (GHVDHGKT). Thr26 serves as a coordination point for Mg(2+). Positions 55 to 59 (GITIA) are G2. The segment at 76–79 (DCPG) is G3. Residues 76–80 (DCPGH) and 131–134 (NKAD) each bind GTP. Residues 131–134 (NKAD) form a G4 region. Residues 168-170 (SAL) form a G5 region.

The protein belongs to the TRAFAC class translation factor GTPase superfamily. Classic translation factor GTPase family. EF-Tu/EF-1A subfamily. In terms of assembly, monomer.

The protein localises to the cytoplasm. The enzyme catalyses GTP + H2O = GDP + phosphate + H(+). Functionally, GTP hydrolase that promotes the GTP-dependent binding of aminoacyl-tRNA to the A-site of ribosomes during protein biosynthesis. In Wolbachia pipientis wMel, this protein is Elongation factor Tu 2.